We begin with the raw amino-acid sequence, 184 residues long: Endothelial cell-specific molecule 1 (184 aa).

Positions 1 to 21 (MKSLLLLTTLLIPLHLGMAWS) are cleaved as a signal peptide. An IGFBP N-terminal domain is found at 24–102 (YAVDCPEHCD…GDEFGVCKDC (79 aa)). Disulfide bonds link cysteine 28–cysteine 51, cysteine 32–cysteine 53, cysteine 37–cysteine 54, cysteine 43–cysteine 57, cysteine 65–cysteine 83, and cysteine 77–cysteine 99. The disordered stretch occupies residues 145-184 (RTSASQTERDAASGDGNAVREEIGDRNAARPSVMKWLNPR). Basic and acidic residues predominate over residues 151–172 (TERDAASGDGNAVREEIGDRNA). The O-linked (Xyl...) (chondroitin sulfate) serine glycan is linked to serine 157.

In terms of processing, O-glycosylated; contains chondroitin sulfate and dermatan sulfate. As to expression, pineal gland specific.

Its subcellular location is the secreted. In terms of biological role, involved in angiogenesis; promotes angiogenic sprouting. May have potent implications in lung endothelial cell-leukocyte interactions. This is Endothelial cell-specific molecule 1 (Esm1) from Rattus norvegicus (Rat).